The following is a 496-amino-acid chain: Probable serine/threonine-protein kinase DDB_G0284251 (496 aa).

Residues 1–13 are compositionally biased toward low complexity; the sequence is MIEINNNHNNGNG. The interval 1–25 is disordered; it reads MIEINNNHNNGNGKQFPSSQIMPDS. The Protein kinase domain occupies 36 to 288; that stretch reads YTLGEKIGRG…AQELLQHPIF (253 aa). ATP-binding positions include 42-50 and Lys-65; that span reads IGRGAFGQV. Residue Asp-158 is the Proton acceptor of the active site. Positions 323–345 are disordered; it reads DWGSSSSTSGSSTPLSSSSSSSN. The stretch at 353–386 forms a coiled coil; sequence EDFNKLQTTIKQQAQTISNLSEEILILKKELKEK. The segment at 454–496 is disordered; the sequence is PQLTPSSSRENISLSNSSSSIPNPNQNQNQNNKSKSKKFGFFS. The segment covering 458–486 has biased composition (low complexity); sequence PSSSRENISLSNSSSSIPNPNQNQNQNNK. The segment covering 487–496 has biased composition (basic residues); the sequence is SKSKKFGFFS.

The protein belongs to the protein kinase superfamily. STE Ser/Thr protein kinase family. Mg(2+) is required as a cofactor.

It carries out the reaction L-seryl-[protein] + ATP = O-phospho-L-seryl-[protein] + ADP + H(+). The enzyme catalyses L-threonyl-[protein] + ATP = O-phospho-L-threonyl-[protein] + ADP + H(+). In Dictyostelium discoideum (Social amoeba), this protein is Probable serine/threonine-protein kinase DDB_G0284251.